A 540-amino-acid chain; its full sequence is Glucose-6-phosphate isomerase (540 aa).

Glutamate 350 functions as the Proton donor in the catalytic mechanism. Residues histidine 381 and lysine 503 contribute to the active site.

Belongs to the GPI family.

It is found in the cytoplasm. It catalyses the reaction alpha-D-glucose 6-phosphate = beta-D-fructose 6-phosphate. Its pathway is carbohydrate biosynthesis; gluconeogenesis. The protein operates within carbohydrate degradation; glycolysis; D-glyceraldehyde 3-phosphate and glycerone phosphate from D-glucose: step 2/4. Its function is as follows. Catalyzes the reversible isomerization of glucose-6-phosphate to fructose-6-phosphate. The chain is Glucose-6-phosphate isomerase from Burkholderia lata (strain ATCC 17760 / DSM 23089 / LMG 22485 / NCIMB 9086 / R18194 / 383).